The primary structure comprises 86 residues: Large ribosomal subunit protein bL31B (86 aa).

Belongs to the bacterial ribosomal protein bL31 family. Type B subfamily. Part of the 50S ribosomal subunit.

The polypeptide is Large ribosomal subunit protein bL31B (Cupriavidus metallidurans (strain ATCC 43123 / DSM 2839 / NBRC 102507 / CH34) (Ralstonia metallidurans)).